We begin with the raw amino-acid sequence, 396 residues long: MAEKEHYERTKPHVNIGTIGHVDHGKTTLTAAITKVLAAKGLAKAEDYSDIDAAPEEKERGITINTAHVEYETEKRHYAHIDAPGHADYVKNMITGAAQMDGAILVVAATDGPMPQTREHILLARQVGVEYIVVFLNKTDLVDDDELVDLVEMEVRDLLSEYDFPGDDVPVVRGSALKALEGDPEQEQVVLHLLDVVDEYIPTPKRPTDKPFMMPVEDVFTITGRGTVASGRIDRGTVKIGDEVEIVGLKEDVIKSTVTGVEMFHKTLDLGEAGDNVGILLRGVSHDQIERGQVLAEPGSIQTHKQFKGEVYVMTKEEGGRHTPFFSNYRPQFYFHTTDVTGTIELPDGVEMVMPGDNVTFTVELQKPVALEKGLKFTIREGGHTVGAGVVSEVLD.

One can recognise a tr-type G domain in the interval 11-205 (KPHVNIGTIG…VVDEYIPTPK (195 aa)). The tract at residues 20-27 (GHVDHGKT) is G1. Residue 20–27 (GHVDHGKT) coordinates GTP. T27 is a Mg(2+) binding site. Residues 61-65 (GITIN) form a G2 region. Positions 82–85 (DAPG) are G3. Residues 82–86 (DAPGH) and 137–140 (NKTD) each bind GTP. Residues 137–140 (NKTD) form a G4 region. The interval 175-177 (SAL) is G5.

Belongs to the TRAFAC class translation factor GTPase superfamily. Classic translation factor GTPase family. EF-Tu/EF-1A subfamily. In terms of assembly, monomer.

Its subcellular location is the cytoplasm. It catalyses the reaction GTP + H2O = GDP + phosphate + H(+). Functionally, GTP hydrolase that promotes the GTP-dependent binding of aminoacyl-tRNA to the A-site of ribosomes during protein biosynthesis. This chain is Elongation factor Tu, found in Limosilactobacillus fermentum (strain NBRC 3956 / LMG 18251) (Lactobacillus fermentum).